Consider the following 546-residue polypeptide: NADH-ubiquinone oxidoreductase chain 5 (546 aa).

The next 16 helical transmembrane spans lie at 1–21 (MFLL…SPIA), 31–51 (IIAI…YYEV), 52–72 (VFMG…VGTF), 82–102 (LLTA…HMYA), 112–132 (LNLF…LVAA), 135–155 (LLVM…LIGY), 175–195 (VSDG…GSLE), 198–218 (LLNV…GAMG), 237–257 (TPVS…YLLV), 264–284 (EMFV…FGAT), 291–310 (VIAY…LGLG), 321–341 (LMTH…VISG), 358–378 (AMFT…WPEL), 387–407 (ILNL…TLLL), 440–460 (VLPI…VWVG), and 468–488 (LFFL…AGIL).

The protein belongs to the complex I subunit 5 family.

The protein localises to the mitochondrion inner membrane. The enzyme catalyses a ubiquinone + NADH + 5 H(+)(in) = a ubiquinol + NAD(+) + 4 H(+)(out). Core subunit of the mitochondrial membrane respiratory chain NADH dehydrogenase (Complex I) that is believed to belong to the minimal assembly required for catalysis. Complex I functions in the transfer of electrons from NADH to the respiratory chain. The immediate electron acceptor for the enzyme is believed to be ubiquinone. The sequence is that of NADH-ubiquinone oxidoreductase chain 5 (ND5) from Chlamydomonas reinhardtii (Chlamydomonas smithii).